We begin with the raw amino-acid sequence, 35 residues long: Mu-theraphotoxin-Pn3b (35 aa).

Disulfide bonds link Cys-2–Cys-16, Cys-9–Cys-21, and Cys-15–Cys-28.

It belongs to the neurotoxin 10 (Hwtx-1) family. 28 (Jztx-11) subfamily. As to expression, expressed by the venom gland.

Its subcellular location is the secreted. In terms of biological role, gating-modifier toxin that targets voltage-gated sodium channels with a preferential activity on Nav1.7/SCN9A. On Nav1.7/SCN9A, the toxin acts by shifting the voltage-dependence of activation to more depolarized potentials, whereas it does not cause significant effect on the voltage-dependence of activation on other sodium channels. Minor effects are observed on the voltage-dependence of steady-state fast inactivation for all sodium channels tested (Nav1.1/SCN1A-Nav1.8/SCN10A). By testing the toxin on channel chimera, it has been shown to interact with the S3-S4 linkers in DII and DIV domains of Nav1.7/SCN9A. In vivo, the toxin dose-dependently reduces OD1-induced spontaneous pain behaviors. In Pamphobeteus nigricolor (Giant blue bloom tarantula), this protein is Mu-theraphotoxin-Pn3b.